Consider the following 46-residue polypeptide: uncharacterized protein (46 aa).

The helical transmembrane segment at 20-42 threads the bilayer; that stretch reads MAMIWVVAALVIALVVGTALNYI.

Its subcellular location is the membrane. This is an uncharacterized protein from Bacillus subtilis (strain 168).